The primary structure comprises 382 residues: ATP phosphoribosyltransferase regulatory subunit (382 aa).

Belongs to the class-II aminoacyl-tRNA synthetase family. HisZ subfamily. In terms of assembly, heteromultimer composed of HisG and HisZ subunits.

It is found in the cytoplasm. The protein operates within amino-acid biosynthesis; L-histidine biosynthesis; L-histidine from 5-phospho-alpha-D-ribose 1-diphosphate: step 1/9. Functionally, required for the first step of histidine biosynthesis. May allow the feedback regulation of ATP phosphoribosyltransferase activity by histidine. This chain is ATP phosphoribosyltransferase regulatory subunit, found in Burkholderia pseudomallei (strain 1106a).